The chain runs to 905 residues: MTDKSSSNLVPVNIEDEMKVSYLDYAMSVIVSRAIPDVRDGLKPVHRRIIYSMHEAGNHASKPYRKSARIVGDVMGKYHPHGDSAIYDALVRMAQDFSLRLPLVDGQGNFGSMDGDAAAAMRYTESRMAKVSYKLVEDIDKETVSFNPNYDGSEEEPSVLPAMFPNLLVNGSGGIAVGMATNIPPHNLGEVIDACCLYIDNNDIEILDLLEVVKGPDFPTGSMILGISGIRSAYLTGRGSIIMRGRAEIENIGNNRQAIIITEIPYMVNKARLVEKIAEMVKEKRIEGISDLRDESNKNGVRIFIELKKDVVAEVVLNQIYACTQLQTSFGVIMLALKDGLPKVMNLKEVIAAFVSFREVVITNRTIYLLNKARDRAHILLGLTIAVSNIDEIIRIIKASNDSNAAKQELMARQWEALNILPLVKLVDDKAMLNEQGKCNFTEVQAKAILEMRLQRLTAMEKNKLEEDLKNLITEITEYLNILGSRTRLLEILKEELIKVKEEFATPRLTSIEFGEFDQDIEDLIQREEMVVTVTLGGYIKRVPLSSYRAQKRGGKGRSGLSMRDEDITTQVFVGSTHTPMLFFSNIGQVYSLKLYKLPLSNPQGKGRPMVNILPLKANEHITNIMPLPENQDERDNLNIMFATAKGNIRRSDLLDFKKLQSNGKIAIRLDEDDKLIDVKPCKEDEHILLATKAGKALRFPVESLRVIKSRTSDGVRGMKLAKEDSVISMTVLKGISSTKEDRDAYLSVPWEQRLEIAKGEAFNPEELGVSLTAPAIVEMANSEEFILTVTENGFGKRSSAYGYRITDRGGSGIINMDINDKTGLVVGVMPVKMDDELMLITNSGKLIRCKLESVRITGRNTSGVILFKLDDGEKVVSVSLIAETAESEEDSELEEEGLEQSEEV.

The region spanning 35 to 524 is the Topo IIA-type catalytic domain; it reads IPDVRDGLKP…GEFDQDIEDL (490 aa). The active-site O-(5'-phospho-DNA)-tyrosine intermediate is the Tyr123. The GyrA-box signature appears at 551–557; that stretch reads QKRGGKG. Residues 885 to 905 are disordered; sequence TAESEEDSELEEEGLEQSEEV. A compositionally biased stretch (acidic residues) spans 886–905; that stretch reads AESEEDSELEEEGLEQSEEV.

Belongs to the type II topoisomerase GyrA/ParC subunit family. In terms of assembly, heterotetramer, composed of two GyrA and two GyrB chains. In the heterotetramer, GyrA contains the active site tyrosine that forms a transient covalent intermediate with DNA, while GyrB binds cofactors and catalyzes ATP hydrolysis.

The protein resides in the cytoplasm. It carries out the reaction ATP-dependent breakage, passage and rejoining of double-stranded DNA.. Functionally, a type II topoisomerase that negatively supercoils closed circular double-stranded (ds) DNA in an ATP-dependent manner to modulate DNA topology and maintain chromosomes in an underwound state. Negative supercoiling favors strand separation, and DNA replication, transcription, recombination and repair, all of which involve strand separation. Also able to catalyze the interconversion of other topological isomers of dsDNA rings, including catenanes and knotted rings. Type II topoisomerases break and join 2 DNA strands simultaneously in an ATP-dependent manner. This chain is DNA gyrase subunit A, found in Rickettsia conorii (strain ATCC VR-613 / Malish 7).